Consider the following 343-residue polypeptide: DNA repair and recombination protein RadA (343 aa).

107–114 lines the ATP pocket; sequence GEFGAGKS.

This sequence belongs to the eukaryotic RecA-like protein family.

Functionally, involved in DNA repair and in homologous recombination. Binds and assemble on single-stranded DNA to form a nucleoprotein filament. Hydrolyzes ATP in a ssDNA-dependent manner and promotes DNA strand exchange between homologous DNA molecules. This is DNA repair and recombination protein RadA from Haloquadratum walsbyi (strain DSM 16790 / HBSQ001).